The sequence spans 361 residues: sn-glycerol-3-phosphate import ATP-binding protein UgpC (361 aa).

The 232-residue stretch at 4–235 (VTLRNVRKTY…PATTFVASFI (232 aa)) folds into the ABC transporter domain. 37–44 (GPSGCGKS) provides a ligand contact to ATP.

This sequence belongs to the ABC transporter superfamily. sn-glycerol-3-phosphate importer (TC 3.A.1.1.3) family. In terms of assembly, the complex is composed of two ATP-binding proteins (UgpC), two transmembrane proteins (UgpA and UgpE) and a solute-binding protein (UgpB).

It is found in the cell inner membrane. The catalysed reaction is sn-glycerol 3-phosphate(out) + ATP + H2O = sn-glycerol 3-phosphate(in) + ADP + phosphate + H(+). Its function is as follows. Part of the ABC transporter complex UgpBAEC involved in sn-glycerol-3-phosphate (G3P) import. Responsible for energy coupling to the transport system. The protein is sn-glycerol-3-phosphate import ATP-binding protein UgpC of Rhodopseudomonas palustris (strain BisA53).